Consider the following 341-residue polypeptide: DNA-directed RNA polymerase subunit alpha (341 aa).

The segment at 1 to 237 is alpha N-terminal domain (alpha-NTD); sequence MLSLSKNWNA…EQLQLFISFE (237 aa). The tract at residues 252 to 341 is alpha C-terminal domain (alpha-CTD); the sequence is FSPYLLKRVD…LSKRYEDSYN (90 aa).

It belongs to the RNA polymerase alpha chain family. Homodimer. The RNAP catalytic core consists of 2 alpha, 1 beta, 1 beta' and 1 omega subunit. When a sigma factor is associated with the core the holoenzyme is formed, which can initiate transcription.

It carries out the reaction RNA(n) + a ribonucleoside 5'-triphosphate = RNA(n+1) + diphosphate. In terms of biological role, DNA-dependent RNA polymerase catalyzes the transcription of DNA into RNA using the four ribonucleoside triphosphates as substrates. The polypeptide is DNA-directed RNA polymerase subunit alpha (Rickettsia bellii (strain OSU 85-389)).